The sequence spans 228 residues: MGAWAMLYGVSMLCVLDLGQPSVVEEPGCGPGKVQNGSGNNTRCCSLYAPGKEDCPKERCICVTPEYHCGDPQCKICKHYPCQPGQRVESQGDIVFGFRCVACAMGTFSAGRDGHCRLWTNCSQFGFLTMFPGNKTHNAVCIPEPLPTEQYGHLTVIFLVMAACIFFLTTVQLGLHIWQLRRQHMCPRETQPFAEVQLSAEDACSFQFPEEERGEQTEEKCHLGGRWP.

The first 19 residues, 1–19 (MGAWAMLYGVSMLCVLDLG), serve as a signal peptide directing secretion. Topologically, residues 20–153 (QPSVVEEPGC…EPLPTEQYGH (134 aa)) are extracellular. TNFR-Cys repeat units follow at residues 28 to 61 (GCGP…ERCI), 62 to 101 (CVTP…FRCV), and 102 to 142 (ACAM…AVCI). 5 disulfide bridges follow: C29-C44, C62-C74, C69-C82, C103-C122, and C116-C141. N-linked (GlcNAc...) asparagine glycosylation is found at N36 and N40. N-linked (GlcNAc...) asparagine glycosylation is found at N121 and N134. Residues 154–174 (LTVIFLVMAACIFFLTTVQLG) traverse the membrane as a helical segment. Residues 175–228 (LHIWQLRRQHMCPRETQPFAEVQLSAEDACSFQFPEEERGEQTEEKCHLGGRWP) are Cytoplasmic-facing.

As to quaternary structure, binds to TRAF1, TRAF2, and TRAF3, but not TRAF5 and TRAF6. Binds through its C-terminus to SIVA1/SIVA. Preferentially expressed in activated T lymphocytes.

The protein resides in the cell membrane. Its subcellular location is the secreted. Functionally, receptor for TNFSF18. Seems to be involved in interactions between activated T-lymphocytes and endothelial cells and in the regulation of T-cell receptor-mediated cell death. Mediated NF-kappa-B activation via the TRAF2/NIK pathway. The chain is Tumor necrosis factor receptor superfamily member 18 (Tnfrsf18) from Mus musculus (Mouse).